Consider the following 235-residue polypeptide: Protein RESISTANCE TO PHYTOPHTHORA 1, chloroplastic (235 aa).

The transit peptide at 1-43 directs the protein to the chloroplast; that stretch reads MNSATTMSASVLNYQILKFFPPQKNGFLKSPLIRGKICRFCVS. Over residues 53–66 the composition is skewed to basic and acidic residues; the sequence is VIEDPKEETQEKSD. The interval 53–92 is disordered; sequence VIEDPKEETQEKSDGVIVNSTEEEEERSGENSTSTGPSTV. Helical transmembrane passes span 131–151, 158–178, 188–208, and 211–231; these read FEVQ…NLIF, IWRL…LRAR, LNYL…FLKS, and VVWS…LGWL.

It localises to the plastid. The protein localises to the chloroplast. The protein resides in the membrane. In terms of biological role, plays a positive role in the immune response to the oomycetes P.infestans, including induced oxidative burst and enhanced expression of defense-related genes. The polypeptide is Protein RESISTANCE TO PHYTOPHTHORA 1, chloroplastic (Solanum tuberosum (Potato)).